The primary structure comprises 74 residues: uncharacterized protein (74 aa).

The dksA C4-type zinc finger occupies 35–59; the sequence is CEECDAPIPAARRAAYPSATRCVSC.

This is an uncharacterized protein from Enterobacteriaceae (Bacteriophage P2).